Reading from the N-terminus, the 119-residue chain is MSEPLHALAKQLEQAIRASEPFQQLKRAYEDVRRDETAYRMFANVRDIQLQLHEKQMRGAAILPDEIEQAQKAMALAQQNEKLARLMALEQQMSMTIAEVQQIAMKPLEELHRSFMEGR.

The protein belongs to the UPF0342 family.

This Geobacillus kaustophilus (strain HTA426) protein is UPF0342 protein GK0640.